Reading from the N-terminus, the 151-residue chain is Large ribosomal subunit protein bL9 (151 aa).

It belongs to the bacterial ribosomal protein bL9 family.

Its function is as follows. Binds to the 23S rRNA. This Lacticaseibacillus casei (strain BL23) (Lactobacillus casei) protein is Large ribosomal subunit protein bL9.